A 308-amino-acid polypeptide reads, in one-letter code: N-acetylmuramic acid 6-phosphate etherase (308 aa).

The SIS domain occupies 59 to 222 (TAERLRHGGR…STGVMVKLGK (164 aa)). The active-site Proton donor is Glu-87. The active site involves Glu-118.

The protein belongs to the GCKR-like family. MurNAc-6-P etherase subfamily. Homodimer.

It carries out the reaction N-acetyl-D-muramate 6-phosphate + H2O = N-acetyl-D-glucosamine 6-phosphate + (R)-lactate. Its pathway is amino-sugar metabolism; N-acetylmuramate degradation. Its function is as follows. Specifically catalyzes the cleavage of the D-lactyl ether substituent of MurNAc 6-phosphate, producing GlcNAc 6-phosphate and D-lactate. This is N-acetylmuramic acid 6-phosphate etherase from Nostoc punctiforme (strain ATCC 29133 / PCC 73102).